Consider the following 95-residue polypeptide: Selenoprotein K (95 aa).

A helical membrane pass occupies residues 20-42 (LSFLTDMFWGITDFVVMFFQSII). A disordered region spans residues 47–95 (TRRGCQNSSSSTRYDDGRGPPGHPRRMGRINHGSGPSAPPMAGGGGUGR). Residue Sec93 is a non-standard amino acid, selenocysteine.

Belongs to the selenoprotein K family.

It is found in the endoplasmic reticulum membrane. Its subcellular location is the cell membrane. Functionally, required for Ca(2+) flux in immune cells and plays a role in T-cell proliferation and in T-cell and neutrophil migration. Involved in endoplasmic reticulum-associated degradation (ERAD) of soluble glycosylated proteins. Required for cell surface expression of CD36 and involved in macrophage uptake of low-density lipoprotein and in foam cell formation. Required for palmitoylation. This chain is Selenoprotein K (selenok), found in Xenopus laevis (African clawed frog).